The primary structure comprises 920 residues: MANKNAESSSQPPPHVQPNQQQQQQPPIANEQEQEPHGDTCSIPPAQSGNTDSRSRGGNTVFKSGPLSISSKGIGWTSWKKRWFILTRTSLVFFRSDPSAVQQKGSEVNLTLGGIDLNNSGSVVVKADKKLLTVLFPDGRDGRAFTLKADTMEDLHEWKAALENALTQAPSASHVMGQNGIFRNDHADPAVGVDEKKDETPTKSTVLGRPVLLALEDVDGAPSFLEKALRFVENHGVRIEGILRQAADVDDVEHRIREYEKGKNEFSPEEDAHIIADCLKYFLRELPSSPVPASCCNALLEACRTDRGNRVNAMRAAICESFPEPNRRLLQRILMMMQTVASNKTVNRMNTNAVAACMAPLLLRPLLAGDCEIENDFDVGGDGSMQLLQAAAAANHAQAIVITLLEEYESIFGEGSLSPGLYSDSEESGSGTEEGSDDEEYDDDDDGSQGSEDYTDEEEDLENESNGSYSESAASEDKYADSIDPDDHKINDNLSTESKSPKRSKEPKKLLSGSRRSSLPRHDDGKKDEDIVVKGVNNTEVKAVVEVSTSEDKNSSTSDVASDTQKPSKLSDAPGGSKRHWGRTPGKKNLSMESIDFSVEVDEDNADIERLESTKLELQSRITEEVKSNAVLQASLERRKKALYGRRQALEQDVGRLQEQLQQERDRKLALETGLNMSKGNQPIPETIDENLKKDLQEVAQAEADIAKLEHKVDDLENRLGHHDGKASGSTHSASKESRKLPEHNAKMKEKQKDTEAASTHISERSTSKDGQGAARENETEKQQDSRSKSSQQETSRGSSKLVGLSKRSGTKGEGSTTTTSALSKLTMRLNFLKERRSQIANELQNMDKGKTLGQPSPTSGQNRVSEETEKGSGSNQDPDSSKLQSPHILDRGRSENGGDRGRGSSGGNHPNTTPRTFSR.

Positions 1-10 (MANKNAESSS) are enriched in polar residues. The segment at 1–64 (MANKNAESSS…SRGGNTVFKS (64 aa)) is disordered. A compositionally biased stretch (low complexity) spans 17–31 (QPNQQQQQQPPIANE). Over residues 45–64 (PAQSGNTDSRSRGGNTVFKS) the composition is skewed to polar residues. A PH domain is found at 60–167 (TVFKSGPLSI…WKAALENALT (108 aa)). Residues 213–412 (LALEDVDGAP…TLLEEYESIF (200 aa)) enclose the Rho-GAP domain. 3 disordered regions span residues 417–592 (LSPG…NLSM), 719–825 (RLGH…ALSK), and 837–920 (RSQI…TFSR). Acidic residues predominate over residues 434-463 (EGSDDEEYDDDDDGSQGSEDYTDEEEDLEN). Polar residues predominate over residues 464–473 (ESNGSYSESA). Basic and acidic residues-rich tracts occupy residues 475 to 491 (SEDKYADSIDPDDHKIN), 499 to 509 (KSPKRSKEPKK), and 520 to 532 (PRHDDGKKDEDIV). Residues 555–568 (SSTSDVASDTQKPS) show a composition bias toward polar residues. A compositionally biased stretch (basic residues) spans 577–586 (SKRHWGRTPG). A coiled-coil region spans residues 598–728 (SVEVDEDNAD…RLGHHDGKAS (131 aa)). 2 stretches are compositionally biased toward basic and acidic residues: residues 734–768 (ASKESRKLPEHNAKMKEKQKDTEAASTHISERSTS) and 776–788 (RENETEKQQDSRS). Over residues 814–825 (EGSTTTTSALSK) the composition is skewed to low complexity. Composition is skewed to polar residues over residues 854 to 864 (GQPSPTSGQNR) and 872 to 885 (GSGSNQDPDSSKLQ). A compositionally biased stretch (basic and acidic residues) spans 889–903 (ILDRGRSENGGDRGR). Polar residues predominate over residues 910–920 (HPNTTPRTFSR).

Interacts with ARAC11/ROP1. In terms of tissue distribution, expressed in pollen and pollen tubes.

It localises to the cell membrane. Functionally, acts as a GTPase activator for the Rac-type GTPase by converting it to an inactive GDP-bound state. Maintains the global inactivation of ARAC11/ROP1 at the apex in pollen tubes in order to regulate the polar cell growth. In Arabidopsis thaliana (Mouse-ear cress), this protein is Rho GTPase-activating protein REN1 (REN1).